Reading from the N-terminus, the 218-residue chain is Peptidyl-prolyl cis-trans isomerase FKBP7 (218 aa).

The signal sequence occupies residues 1-19 (MNLLFRLAVFLSLWCCSDA). Asn41 and Asn128 each carry an N-linked (GlcNAc...) asparagine glycan. Residues 49–141 (GDLLNAHYDG…MFEIELYAVT (93 aa)) form the PPIase FKBP-type domain. EF-hand domains follow at residues 141-176 (TKGP…DFEK) and 185-218 (YQKA…HDEL). Residues Asp154, Asp156, Asp158, Gln160, Glu165, Asp198, Asn200, Asp202, and Glu209 each contribute to the Ca(2+) site. Positions 197–218 (NDHNGDGFISPKEYNVHQHDEL) are disordered. Residues 215–218 (HDEL) carry the Prevents secretion from ER motif.

Post-translationally, glycosylated. As to expression, expressed at highest levels in heart, lung and testis. Weakly expressed in kidney and lymph node. Little or no expression detected in brain, thymus, spleen and liver.

It is found in the endoplasmic reticulum lumen. It catalyses the reaction [protein]-peptidylproline (omega=180) = [protein]-peptidylproline (omega=0). PPIases accelerate the folding of proteins during protein synthesis. The polypeptide is Peptidyl-prolyl cis-trans isomerase FKBP7 (Fkbp7) (Mus musculus (Mouse)).